The chain runs to 94 residues: Citrate lyase acyl carrier protein (94 aa).

Serine 14 bears the O-(phosphoribosyl dephospho-coenzyme A)serine mark.

This sequence belongs to the CitD family. Oligomer with a subunit composition of (alpha,beta,gamma)6.

The protein localises to the cytoplasm. Its function is as follows. Covalent carrier of the coenzyme of citrate lyase. The sequence is that of Citrate lyase acyl carrier protein from Fusobacterium nucleatum subsp. nucleatum (strain ATCC 25586 / DSM 15643 / BCRC 10681 / CIP 101130 / JCM 8532 / KCTC 2640 / LMG 13131 / VPI 4355).